A 313-amino-acid chain; its full sequence is Ribosomal RNA small subunit methyltransferase H (313 aa).

Residues 31–33 (GGH), Asp-51, Phe-77, Asp-95, and Gln-102 contribute to the S-adenosyl-L-methionine site.

Belongs to the methyltransferase superfamily. RsmH family.

The protein resides in the cytoplasm. It catalyses the reaction cytidine(1402) in 16S rRNA + S-adenosyl-L-methionine = N(4)-methylcytidine(1402) in 16S rRNA + S-adenosyl-L-homocysteine + H(+). Its function is as follows. Specifically methylates the N4 position of cytidine in position 1402 (C1402) of 16S rRNA. In Xylella fastidiosa (strain M23), this protein is Ribosomal RNA small subunit methyltransferase H.